Reading from the N-terminus, the 233-residue chain is Methyltransferase srdJ (233 aa).

The segment at 1–32 (MFQVQTAGTRTGTSSPDTTTSEAGLGSTPPMP) is disordered. The segment covering 9-21 (TRTGTSSPDTTTS) has biased composition (low complexity). The S-adenosyl-L-methionine site is built by Trp-40, Trp-52, and Gly-81. The Required for methyltransferase activity motif lies at 140–146 (EISSQKY).

Belongs to the methyltransferase superfamily.

Functionally, methyltransferase; part of the gene cluster that mediates the biosynthesis of sordarial, a salicylic aldehyde structurally related to the phytotoxin pyriculol. The most interesting aspect of this pathway is formation of an aromatic product from the highly reducing polyketide synthase srdA. SrdA synthesizes a reduced polyketide chain from one molecule of acetyl-CoA and five molecules of malonyl-CoA. The polyketide chain is then reductively released as an aldehyde. The oxidoreductases srdC, srdD and srdE then oxidize one of the hydroxy groups to facilitate the intramolecular aldol condensation, followed by dehydration to yield a salicylic aldehyde. This aldehyde can undergo facile reduction by endogenous reductases to yield the alcohol 1-hydroxy-2-hydroxymethyl-3-pent-1,3-dienylbenzene. The flavin-dependent srdI counteract against the propensity of the aldehydes to be reduced under physiological conditions and is responsible for reoxidizing 1-hydroxy-2-hydroxymethyl-3-pent-1,3-dienylbenzene back to the salicylic aldehyde. This salicylic aldehyde is then selectively epoxidized by the cupin-domain-containing oxidoreductase srdB to yield the epoxide, which can be hydrolyzed stereoselectively by the hydrolase srdG to give the final product sordarial. The sequence is that of Methyltransferase srdJ from Neurospora crassa (strain ATCC 24698 / 74-OR23-1A / CBS 708.71 / DSM 1257 / FGSC 987).